A 407-amino-acid polypeptide reads, in one-letter code: M protein, serotype 2.1 (407 aa).

Residues 1-41 form the signal peptide; it reads MARKDTNKQYSLRKLKTGTASVAVAVAVLGAGFANQTTVKA. A 2 X 7 AA tandem repeats region spans residues 81 to 94; it reads VEEEHKKVEEEHKK. Composition is skewed to basic and acidic residues over residues 83–144, 152–229, 237–264, and 272–288; these read EEHK…KRYQ, QLEK…EKQI, LSRDLEASRAAKKDLEAEHQKLKEEKQI, and LSRDLEASREAKKKVEA. Residues 83-289 are disordered; it reads EEHKKVEEEH…REAKKKVEAD (207 aa). 4 C repeats span residues 151-185, 186-220, 221-255, and 256-290; these read QQLEKEKQISEASRKSLRRDLEASRAAKKDLEAEH, QKLKEEKQISEASRKSLRRDLEASRAAKKDLEAEH, QKLKEEKQISEASRQGLSRDLEASRAAKKDLEAEH, and QKLKEEKQISEASRQGLSRDLEASREAKKKVEADL. D repeat units lie at residues 323–328, 329–334, 337–342, and 344–349; these read AKLEAE, AKALKE, AKQAEE, and AKLKGN. Residues 344–382 are disordered; it reads AKLKGNQTPNAKVAPQANRSRSAMTQQKRTLPSTGETAN. The segment covering 360-380 has biased composition (polar residues); it reads ANRSRSAMTQQKRTLPSTGET. The LPXTG sorting signal signature appears at 374–378; the sequence is LPSTG. Threonine 377 is subject to Pentaglycyl murein peptidoglycan amidated threonine. Residues 378–407 constitute a propeptide, removed by sortase; sequence GETANPFFTAAAATVMVSAGMLALKRKEEN.

Belongs to the M protein family.

Its subcellular location is the secreted. The protein resides in the cell wall. In terms of biological role, this protein is one of the different antigenic serotypes of protein M. Protein M is closely associated with virulence of the bacterium and can render the organism resistant to phagocytosis. The polypeptide is M protein, serotype 2.1 (emmL2.1) (Streptococcus pyogenes).